The following is a 394-amino-acid chain: Probable cytosolic iron-sulfur protein assembly protein 1 (394 aa).

WD repeat units lie at residues 10-49, 56-108, 144-184, 191-230, 237-284, 313-352, and 359-394; these read AHND…NFPL, AHKR…EQDS, GHEN…EEFE, DHQH…DDWS, GHGG…TEQI, IHKY…KWEI, and AHGV…IWEP.

Belongs to the WD repeat CIA1 family. Interacts with NAR1.

It localises to the cytoplasm. It is found in the nucleus. Essential component of the cytosolic iron-sulfur (Fe/S) protein assembly machinery. Required for the maturation of extramitochondrial Fe/S proteins. This is Probable cytosolic iron-sulfur protein assembly protein 1 from Debaryomyces hansenii (strain ATCC 36239 / CBS 767 / BCRC 21394 / JCM 1990 / NBRC 0083 / IGC 2968) (Yeast).